We begin with the raw amino-acid sequence, 353 residues long: AA9 family lytic polysaccharide monooxygenase A (353 aa).

A signal peptide spans 1–19; the sequence is MKSTFGLLALAAAAKMAHA. Cu(2+)-binding residues include histidine 20 and histidine 102. The cysteines at positions 62 and 183 are disulfide-linked. O2 is bound at residue histidine 169. Tyrosine 180 serves as a coordination point for Cu(2+). The span at 266–276 shows a compositional bias: low complexity; that stretch reads KPTTTTAAAPA. Residues 266 to 316 are disordered; sequence KPTTTTAAAPAETDSCDGDDDDYETETPAPQASATQAPAPQRPAPQTPSGS. Acidic residues predominate over residues 279-290; that stretch reads DSCDGDDDDYET. A compositionally biased stretch (low complexity) spans 291-304; the sequence is ETPAPQASATQAPA. The CBM1 domain occupies 315 to 351; it reads GSVKEWYQCGGINYTGAKNCESGLVCKEWNPYYHQCI. N-linked (GlcNAc...) asparagine glycosylation occurs at asparagine 327.

This sequence belongs to the polysaccharide monooxygenase AA9 family. Requires Cu(2+) as cofactor.

Its subcellular location is the secreted. The enzyme catalyses [(1-&gt;4)-beta-D-glucosyl]n+m + reduced acceptor + O2 = 4-dehydro-beta-D-glucosyl-[(1-&gt;4)-beta-D-glucosyl]n-1 + [(1-&gt;4)-beta-D-glucosyl]m + acceptor + H2O.. Functionally, lytic polysaccharide monooxygenase (LPMO) that depolymerizes crystalline and amorphous polysaccharides via the oxidation of scissile alpha- or beta-(1-4)-glycosidic bonds, yielding C4 oxidation products. Catalysis by LPMOs requires the reduction of the active-site copper from Cu(II) to Cu(I) by a reducing agent and H(2)O(2) or O(2) as a cosubstrate. This chain is AA9 family lytic polysaccharide monooxygenase A (eglD), found in Aspergillus clavatus (strain ATCC 1007 / CBS 513.65 / DSM 816 / NCTC 3887 / NRRL 1 / QM 1276 / 107).